The following is a 241-amino-acid chain: MVDYYEVLGVQRHASPEDIKKAYRKLALKWHPDKNPENKEEAERKFKQVAEAYEVLSDAKKRDIYDKYGKEGLNGGGGGGSHFDSPFEFGFTFRNPDDVFREFFGGRDPFSFEFFEDPFEDFFGNRRGPRGSRSRGTGSFFSAFSGFPSFGSGFSSFDTGFTSFGSLGHGGLTSFSSTSFGGGGMGNFKSISTSTKMVNGRKITTKRIVENGQERVEVEEDGQLKSLTINGKEQLLRLDNK.

Residues 2 to 146 (VDYYEVLGVQ…TGSFFSAFSG (145 aa)) form an interaction with HSP70 region. In terms of domain architecture, J spans 3–69 (DYYEVLGVQR…KKRDIYDKYG (67 aa)). The interval 119 to 241 (FEDFFGNRRG…KEQLLRLDNK (123 aa)) is interaction with KRT18. Arg-135 carries the post-translational modification Omega-N-methylarginine.

As to quaternary structure, homooligomer. Interacts with BAG3, HSPB8 and STUB1. Interacts with ALKBH1. Interacts with HSP70, KRT18 and PTTG.

It localises to the cytoplasm. Its subcellular location is the perinuclear region. The protein resides in the nucleus. The protein localises to the myofibril. It is found in the sarcomere. It localises to the z line. Its function is as follows. Has a stimulatory effect on the ATPase activity of HSP70 in a dose-dependent and time-dependent manner and hence acts as a co-chaperone of HSP70. Plays an indispensable role in the organization of KRT8/KRT18 filaments. Acts as an endogenous molecular chaperone for neuronal proteins including huntingtin. Suppresses aggregation and toxicity of polyglutamine-containing, aggregation-prone proteins. Also reduces cellular toxicity and caspase-3 activity. This Macaca fascicularis (Crab-eating macaque) protein is DnaJ homolog subfamily B member 6.